A 1382-amino-acid chain; its full sequence is ATP-dependent RNA helicase TDRD9 (1382 aa).

Residues 36–62 (AAREEVQRQDVAPGAGPAAQAPALAQA) are disordered. Over residues 47 to 62 (APGAGPAAQAPALAQA) the composition is skewed to low complexity. One can recognise a Helicase ATP-binding domain in the interval 142 to 308 (VSLIESNSVV…FAVPVQNKMN (167 aa)). 155-162 (GATGSGKS) contacts ATP. The DEAH box signature appears at 254–257 (DEVH). The Helicase C-terminal domain occupies 377-544 (SGAQFVLERS…ILKVKLLDMG (168 aa)). Residues 944–1004 (HPHPDLVCLA…MEIPCQFLEL (61 aa)) enclose the Tudor domain.

It belongs to the DEAD box helicase family. DEAH subfamily. As to quaternary structure, interacts with piRNA-associated proteins PIWIL1 and PIWIL4.

The protein localises to the cytoplasm. The protein resides in the nucleus. The catalysed reaction is ATP + H2O = ADP + phosphate + H(+). In terms of biological role, ATP-binding RNA helicase required during spermatogenesis. Required to repress transposable elements and prevent their mobilization, which is essential for the germline integrity. Acts via the piRNA metabolic process, which mediates the repression of transposable elements during meiosis by forming complexes composed of piRNAs and Piwi proteins and governs the methylation and subsequent repression of transposons. Acts downstream of piRNA biogenesis: exclusively required for transposon silencing in the nucleus, suggesting that it acts as a nuclear effector in the nucleus together with PIWIL4. This Homo sapiens (Human) protein is ATP-dependent RNA helicase TDRD9.